The following is a 144-amino-acid chain: Large ribosomal subunit protein uL15 (144 aa).

Residues 1-52 (MRLNTLSPAAGSKPSKKRVGRGIGSGLGKTGGRGHKGQKSRSGGKVRAGFEG) are disordered. The segment covering 21–31 (RGIGSGLGKTG) has biased composition (gly residues). A compositionally biased stretch (basic residues) spans 32 to 44 (GRGHKGQKSRSGG).

It belongs to the universal ribosomal protein uL15 family. As to quaternary structure, part of the 50S ribosomal subunit.

Functionally, binds to the 23S rRNA. This Aliivibrio fischeri (strain ATCC 700601 / ES114) (Vibrio fischeri) protein is Large ribosomal subunit protein uL15.